We begin with the raw amino-acid sequence, 249 residues long: MKVLVPVKRVVDYNVKVRVKGDGSGVELANVKMSMNPFDEIAVEEALRLKEGGKATEVVVVSIGPAQASETIRTGLAMGADRGILVKAEGTVEPLAVAKILKKVAEEEQPGLIILGKQAIDDDSNQTGQMLAALLGWSQATFASKLEVEGSDFKVTREVDGGLQTVKLKGPAIVTTDLRLNEPRYASLPNIMKAKKKPIAEKTVADYGVDVTARLEVLKTTEPAGRKAGVKVKDVAELVSKLKNEAGVL.

The protein belongs to the ETF beta-subunit/FixA family. In terms of assembly, heterodimer of an alpha and a beta subunit. It depends on FAD as a cofactor. AMP serves as cofactor.

Its function is as follows. The electron transfer flavoprotein serves as a specific electron acceptor for other dehydrogenases. It transfers the electrons to the main respiratory chain via ETF-ubiquinone oxidoreductase (ETF dehydrogenase). This Bradyrhizobium diazoefficiens (strain JCM 10833 / BCRC 13528 / IAM 13628 / NBRC 14792 / USDA 110) protein is Electron transfer flavoprotein subunit beta (etfB).